Here is a 199-residue protein sequence, read N- to C-terminus: Protein ZNRD2 (199 aa).

Residue alanine 2 is modified to N-acetylalanine. Zn(2+)-binding residues include cysteine 53, cysteine 56, cysteine 70, and cysteine 73. Serine 94 carries the phosphoserine modification. The segment at 100–125 (QLASASELPLGSRPAPQPPVPRPEHC) is disordered. A Nuclear export signal motif is present at residues 173–194 (SLETSIQLCGLIRACAEALRSL).

Homodimer. It depends on Zn(2+) as a cofactor.

The protein localises to the cytoplasm. Functionally, might play a role in mitosis. Antigenic molecule. Could be a centromere-associated protein. May induce anti-centromere antibodies. The chain is Protein ZNRD2 from Homo sapiens (Human).